The primary structure comprises 314 residues: Zinc-binding alcohol dehydrogenase domain-containing protein cipB (314 aa).

This sequence belongs to the zinc-containing alcohol dehydrogenase family.

Involved in osmoadaptation. This Emericella nidulans (strain FGSC A4 / ATCC 38163 / CBS 112.46 / NRRL 194 / M139) (Aspergillus nidulans) protein is Zinc-binding alcohol dehydrogenase domain-containing protein cipB (cipB).